A 149-amino-acid polypeptide reads, in one-letter code: Basic phospholipase A2 homolog MitTx-beta (149 aa).

The N-terminal stretch at 1–30 (MDKMNPAHLLVLAAVCVSLLGASSIPPQAL) is a signal peptide. 7 disulfide bridges follow: cysteine 41-cysteine 100, cysteine 55-cysteine 148, cysteine 57-cysteine 73, cysteine 72-cysteine 130, cysteine 79-cysteine 123, cysteine 89-cysteine 116, and cysteine 109-cysteine 121.

Belongs to the phospholipase A2 family. Group I subfamily. K49 sub-subfamily. As to quaternary structure, heterodimer of an alpha (Kunitz-type) and a beta (phospholipase A2 homolog) chains; non-covalently-linked. As to expression, expressed by the venom gland.

Its subcellular location is the secreted. In terms of biological role, heterodimer: MitTx, a heteromeric complex between Kunitz- and phospholipase-A2-like proteins, potently, persistently and selectively activates rat and chicken acid-sensing ion channel ASIC1. Both alternatively spliced rat isoforms ASIC1a and ASIC1b are activated, with a higher potency for ASIC1a (EC(50)=9.4 nM) vs ASIC1b (EC(50)=23 nM). The rat ASIC3 subtype is also sensitive to the heterodimer, but with a lower potency (EC(50)=830 nM). On rat ASIC2a, the toxin shows a very weak activation, but produces a remarkable potentiation (&gt;100-fold) of protons when the extracellular pH drops below neutrality. Moderate and weak activations are also observed on the heterotrimers Asic1a-Asic2a and Asic1a-Asic3 (expressed in CHO cells), respectively. The binding sites of the beta subunit of MitTx and the spider psalmotoxin-1 toxin overlap, explaining why these toxins are mutually exclusive. In vivo, the heterodimer elicits robust pain-related behavior in mice by activation of ASIC1 channels on capsaicin-sensitive nerve fibers. Its function is as follows. Monomer: does not have phospholipase A2 activity but may maintain some lipid-binding character from its PLA2 lineage, which could aid in effecting neuronal depolarization. The sequence is that of Basic phospholipase A2 homolog MitTx-beta from Micrurus tener tener (Texas coral snake).